The chain runs to 373 residues: Peptide chain release factor 2 (373 aa).

Gln-251 carries the N5-methylglutamine modification.

The protein belongs to the prokaryotic/mitochondrial release factor family. Methylated by PrmC. Methylation increases the termination efficiency of RF2.

The protein localises to the cytoplasm. In terms of biological role, peptide chain release factor 2 directs the termination of translation in response to the peptide chain termination codons UGA and UAA. The sequence is that of Peptide chain release factor 2 from Salinispora tropica (strain ATCC BAA-916 / DSM 44818 / JCM 13857 / NBRC 105044 / CNB-440).